The sequence spans 813 residues: Lon protease (813 aa).

Residues 14 to 207 (LPLLPLRGII…ILTEILAREM (194 aa)) enclose the Lon N-terminal domain. 359-366 (GPPGVGKT) provides a ligand contact to ATP. The 182-residue stretch at 595-776 (ESQVGVATGL…DQVIREALLE (182 aa)) folds into the Lon proteolytic domain. Catalysis depends on residues serine 682 and lysine 725.

It belongs to the peptidase S16 family. In terms of assembly, homohexamer. Organized in a ring with a central cavity.

Its subcellular location is the cytoplasm. The catalysed reaction is Hydrolysis of proteins in presence of ATP.. In terms of biological role, ATP-dependent serine protease that mediates the selective degradation of mutant and abnormal proteins as well as certain short-lived regulatory proteins. Required for cellular homeostasis and for survival from DNA damage and developmental changes induced by stress. Degrades polypeptides processively to yield small peptide fragments that are 5 to 10 amino acids long. Binds to DNA in a double-stranded, site-specific manner. This is Lon protease from Heliobacterium modesticaldum (strain ATCC 51547 / Ice1).